Here is a 113-residue protein sequence, read N- to C-terminus: ATP-dependent Clp protease adapter protein ClpS (113 aa).

Belongs to the ClpS family. Binds to the N-terminal domain of the chaperone ClpA.

Functionally, involved in the modulation of the specificity of the ClpAP-mediated ATP-dependent protein degradation. The sequence is that of ATP-dependent Clp protease adapter protein ClpS from Corynebacterium diphtheriae (strain ATCC 700971 / NCTC 13129 / Biotype gravis).